The chain runs to 437 residues: Aromatic peroxidase fscJ (437 aa).

The first 19 residues, 1-19, serve as a signal peptide directing secretion; sequence MKWLHLLSVVACVADEVYA. Residue Cys-83 participates in heme binding.

It belongs to the chloroperoxidase family. Requires heme b as cofactor.

Its pathway is secondary metabolite biosynthesis. Aromatic peroxidase; part of the fragmented gene cluster that mediates the biosynthesis of fusarochromene, a tryptophan-derived metabolite closely related to a group of mycotoxins including fusarochromanone. The role of fscJ within the pathway has not been identified yet. The first step of the pathway is the epimerization of L-tryptophan to D-tryptophan in the presence of the NRPS-like tryptophan epimerase fscC. D-tryptophan is subsequently hydroxylated by the tryptophan 6-hydroxylase fscE to yield 6-hydroxytryptophan. The pyrrole ring undergoes cleavaged by the tryptophan 2,3-dioxygenase fscD and is finally converted to 4-hydroxykyrunenine by the hydrolase fscH. The NRPS-like oxidoreductase fscA reduces the carboxyl group to primary alcohol and the DMATS-type prenyltransferase fscG performs prenylation, followed by the formation of a chromene ring catalyzed by the oxidoreductase fscI, which leads to desacetylfusarochromene. Epoxidation by fscF and rearrangement reactions of chromene double bonds convert compound desacetylfusarochromene to fusarochromanones. Although specific acetyltransferases were not found near the fsc gene cluster, several predicted enzymes containing the N-acetyltransferase superfamily domain are present in the genome of F.equiseti. These predicted enzymes may have the potential to convert desacetylfusarochromene to fusarochromene. This Fusarium equiseti (Fusarium scirpi) protein is Aromatic peroxidase fscJ.